A 71-amino-acid polypeptide reads, in one-letter code: Large ribosomal subunit protein bL31 (71 aa).

Zn(2+) is bound by residues Cys-16, Cys-18, Cys-36, and Cys-39.

This sequence belongs to the bacterial ribosomal protein bL31 family. Type A subfamily. In terms of assembly, part of the 50S ribosomal subunit. Zn(2+) is required as a cofactor.

Functionally, binds the 23S rRNA. The sequence is that of Large ribosomal subunit protein bL31 from Thermotoga sp. (strain RQ2).